Reading from the N-terminus, the 2194-residue chain is PDZ and LIM domain protein Zasp (2194 aa).

Residues 8–90 (QIKLSRFDAQ…NFVITVQRGG (83 aa)) form the PDZ domain. The disordered stretch occupies residues 211–277 (TGQSTPAFGN…KPPSTGGLPT (67 aa)). Low complexity predominate over residues 228-253 (PQQLQQPQQQYNQHQQHYHQQQQQQQ). The 60-residue stretch at 280-339 (NICTECERLITGVFVRIKDKNLHVECFKCATCGTSLKNQGYYNFNNKLYCDIHAKQAAIN) folds into the LIM zinc-binding 1 domain. Low complexity predominate over residues 415–435 (AATPQAATATDSPAATASSSD). Disordered regions lie at residues 415–436 (AATPQAATATDSPAATASSSDN), 457–476 (VALAPPPPQPPTAGGGDQPF), 511–558 (GAAA…AVEE), 580–611 (SRQSQRGSSFTWPPPQDDSHLAPTAAPLYIPP), 623–692 (VQQV…TTSE), 896–940 (AAAA…PRGS), 1223–1260 (LTQKSQQQPPQANQQQQQQQQQRGTQQQQHSQVTQRTQ), 1297–1322 (QSQSSASYSSKATACSNSSSTVPPAN), 1550–1632 (LNAS…QQPE), 1646–1738 (QREQ…YGKT), and 1815–1837 (APPPGFLQQQQQQQQRSAFSGYQ). A compositionally biased stretch (low complexity) spans 515–530 (PKSPVSYPPQQQQQSP). 2 stretches are compositionally biased toward polar residues: residues 580-590 (SRQSQRGSSFT) and 644-667 (VGTSANGAPQWQSYSAPQLTTASA). Residues 676–692 (SSDSYTSTSTTTTTTSE) show a composition bias toward low complexity. Polar residues predominate over residues 1598–1610 (QTGSITTGQSYQG). 3 stretches are compositionally biased toward low complexity: residues 1616 to 1630 (SEQSSQSASQSYNQQ), 1646 to 1668 (QREQSSQLQQQAQSQTQSQTRSQ), and 1699 to 1727 (SQSVSQSKAQSQSISQAQTQAQSQSQNQS). LIM zinc-binding domains lie at 2018 to 2078 (PLCN…KYLA), 2079 to 2138 (PTCS…LFTT), and 2139 to 2194 (KCFA…NHAR).

Interacts with alpha-actinin (Actn). In terms of tissue distribution, expression is first detected in the proctodeum and the midgut primordium. In stage 11 embryos, expression is predominant in the leading edge of epidermal cells adjacent to the amnioserosa. Stage 12 embryos exhibit expression in the midgut and the leading edge. Expressed in several rows of germ band cells next to the leading edge at stage 14. Strong expression is visible in the midgut and pharyngeal muscles of stage 17 embryos. Also expressed in somatic muscles and visceral mesoderm. Colocalizes with mys (beta PS integrin) in myotendinous junctions and with Actn in muscle Z lines.

The protein localises to the cytoplasm. It localises to the cytoskeleton. In terms of biological role, regulator of cell matrix adhesion having two related functions, one upstream of Actn organizing the Z line and the other downstream of integrins regulating assembly of integrin adhesion sites. Also required for the formation of myotendinous junctions in muscles. In Drosophila melanogaster (Fruit fly), this protein is PDZ and LIM domain protein Zasp (Zasp52).